Here is a 685-residue protein sequence, read N- to C-terminus: Bifunctional lycopene cyclase/phytoene synthase (685 aa).

The segment at 15 to 255 (TLSYRHFHLL…LVSACFTFDR (241 aa)) is lycopene beta-cyclase. 7 helical membrane passes run 21–41 (FHLL…RPFL), 48–68 (KLIL…NLIV), 92–114 (YFFF…RWAL), 129–149 (LATP…KAAV), 156–176 (YFGM…WGSV), 187–207 (GLAP…ASDV), and 231–251 (LPIE…SACF). The phytoene synthase stretch occupies residues 262 to 685 (QSVAENAPPL…RAVSAVYFGV (424 aa)).

The protein in the N-terminal section; belongs to the lycopene beta-cyclase family. It in the C-terminal section; belongs to the phytoene/squalene synthase family.

Its subcellular location is the membrane. The enzyme catalyses all-trans-lycopene = gamma-carotene. It catalyses the reaction gamma-carotene = all-trans-beta-carotene. It carries out the reaction 2 (2E,6E,10E)-geranylgeranyl diphosphate = 15-cis-phytoene + 2 diphosphate. It participates in carotenoid biosynthesis; beta-carotene biosynthesis. The protein operates within carotenoid biosynthesis; phytoene biosynthesis; all-trans-phytoene from geranylgeranyl diphosphate: step 1/1. Its function is as follows. Bifunctional enzyme that catalyzes the reactions from geranylgeranyl diphosphate to phytoene (phytoene synthase) and lycopene to beta-carotene via the intermediate gamma-carotene (lycopene cyclase). The protein is Bifunctional lycopene cyclase/phytoene synthase of Sporisorium reilianum (strain SRZ2) (Maize head smut fungus).